A 525-amino-acid polypeptide reads, in one-letter code: Glutamate--cysteine ligase (525 aa).

This sequence belongs to the glutamate--cysteine ligase type 1 family. Type 1 subfamily.

It carries out the reaction L-cysteine + L-glutamate + ATP = gamma-L-glutamyl-L-cysteine + ADP + phosphate + H(+). The protein operates within sulfur metabolism; glutathione biosynthesis; glutathione from L-cysteine and L-glutamate: step 1/2. The sequence is that of Glutamate--cysteine ligase from Alcanivorax borkumensis (strain ATCC 700651 / DSM 11573 / NCIMB 13689 / SK2).